The sequence spans 2108 residues: Mycocerosic acid synthase-like polyketide synthase (2108 aa).

The first 23 residues, 1–23 (MGKERTKTVDRTRVTPVAVIGMG), serve as a signal peptide directing secretion. A lipid anchor (N-palmitoyl cysteine) is attached at Cys-24. Cys-24 carries S-diacylglycerol cysteine lipidation. The 413-residue stretch at 24-436 (CRLPGGIDSP…GTNVHAIVEQ (413 aa)) folds into the Ketosynthase family 3 (KS3) domain. Residue Cys-185 is the Acyl-thioester intermediate; for beta-ketoacyl synthase activity of the active site. Catalysis depends on for beta-ketoacyl synthase activity residues His-320 and His-356. A linker domain (LD) region spans residues 438–542 (PVPAPESGAP…PYPPAVGQDD (105 aa)). Positions 543–842 (RGPVWVFSGQ…AAALAGMRRE (300 aa)) are acyltransferase (AT). The Acyl-ester intermediate; for acyltransferase activity role is filled by Ser-634. The dehydratase (DH) stretch occupies residues 900 to 1184 (NTVAVHPLLG…LAVRGLQLGT (285 aa)). The interval 905–1025 (HPLLGSHVRL…AVLHVVREAD (121 aa)) is N-terminal hotdog fold. The region spanning 905–1191 (HPLLGSHVRL…LGTGASQASE (287 aa)) is the PKS/mFAS DH domain. His-938 (proton acceptor; for dehydratase activity) is an active-site residue. Positions 1044–1191 (PHKVDGAEVR…LGTGASQASE (148 aa)) are C-terminal hotdog fold. Asp-1108 functions as the Proton donor; for dehydratase activity in the catalytic mechanism. Residues 1220 to 1391 (AWLLISTCDA…SGEDETAWRN (172 aa)) form a pseudo beta-ketoacyl reductase (PsiKR) region. The enoylreductase (ER) stretch occupies residues 1419 to 1743 (AGMRLQIRTP…EHTGKLILDV (325 aa)). The tract at residues 1765-2004 (GSYIITGGLG…HSPFAEKFQS (240 aa)) is beta-ketoacyl reductase (KR). NADP(+) contacts are provided by residues 1773–1776 (LGGL), 1796–1799 (SRSQ), 1824–1825 (DI), and 1897–1898 (FS). One can recognise a Carrier domain in the interval 2025 to 2101 (EEWPDRLRRL…DLMCDKLAAD (77 aa)). Ser-2060 is modified (O-(pantetheine 4'-phosphoryl)serine).

In terms of assembly, homodimer.

It is found in the cell membrane. Its pathway is lipid metabolism; fatty acid biosynthesis. Its function is as follows. Polyketide synthase likely involved in the biosynthesis of a polymethyl-branched fatty acid (PMB-FA) that might only be produced during host infection. Is required for the full virulence of M.tuberculosis during host infection. This is Mycocerosic acid synthase-like polyketide synthase from Mycobacterium tuberculosis (strain ATCC 25618 / H37Rv).